Consider the following 292-residue polypeptide: Large ribosomal subunit protein uL4 (292 aa).

2 stretches are compositionally biased toward basic and acidic residues: residues 1-33 (MVEV…DKTA) and 42-51 (KVSDKAESTP). 2 disordered regions span residues 1-59 (MVEV…VKTS) and 132-158 (GTHK…TGKA).

This sequence belongs to the universal ribosomal protein uL4 family. In terms of assembly, part of the 50S ribosomal subunit.

Functionally, one of the primary rRNA binding proteins, this protein initially binds near the 5'-end of the 23S rRNA. It is important during the early stages of 50S assembly. It makes multiple contacts with different domains of the 23S rRNA in the assembled 50S subunit and ribosome. Its function is as follows. Forms part of the polypeptide exit tunnel. The polypeptide is Large ribosomal subunit protein uL4 (Mycoplasmopsis pulmonis (strain UAB CTIP) (Mycoplasma pulmonis)).